Consider the following 322-residue polypeptide: Cytochrome c biogenesis protein CcsA (322 aa).

The next 7 helical transmembrane spans lie at Ile9 to Leu29, Gly44 to Gly64, Leu71 to Phe91, Met143 to Ile163, Val226 to Asn246, Trp255 to Ile275, and Ala287 to Leu307.

It belongs to the CcmF/CycK/Ccl1/NrfE/CcsA family. As to quaternary structure, may interact with Ccs1.

It localises to the plastid. The protein localises to the chloroplast thylakoid membrane. In terms of biological role, required during biogenesis of c-type cytochromes (cytochrome c6 and cytochrome f) at the step of heme attachment. This is Cytochrome c biogenesis protein CcsA from Lactuca sativa (Garden lettuce).